The primary structure comprises 66 residues: Early E3 7.7 kDa protein (66 aa).

N-linked (GlcNAc...) asparagine; by host glycosylation is found at N7 and N24. Residues 44 to 64 (ITILIVIGILILSVILYFLFS) traverse the membrane as a helical segment.

The protein resides in the host nucleus membrane. This is Early E3 7.7 kDa protein from Human adenovirus B serotype 7 (HAdV-7).